A 625-amino-acid polypeptide reads, in one-letter code: Probable potassium transport system protein Kup 2 (625 aa).

Transmembrane regions (helical) follow at residues 15-35 (LSFAALGVVFGDIGTSPLYAF), 52-72 (ILSLIFWSLIIIVSIKYLVIV), 98-118 (GGWLLFITLVGIGLIIGDGIL), 134-154 (LSPNLAKYVLPVTLIILFFLF), 164-184 (IGIYFAPVMLIWFITIGVLGF), 203-223 (IYFFMIHKYFALFILGGVFLV), 246-266 (WFAVALPALLLCYFGQGAFVL), 284-304 (FLPVMIILATIATIIASQAII), 336-356 (VYLPLINFILALGTCSLVVIF), 365-385 (AYGIAVNLDMLITTVLVGIIA), 394-414 (FKVMIFPLILVIELAFFAGNI), and 417-437 (LLTGGWIPILIAFLGFVVMYT).

The protein belongs to the HAK/KUP transporter (TC 2.A.72) family.

It is found in the cell inner membrane. It catalyses the reaction K(+)(in) + H(+)(in) = K(+)(out) + H(+)(out). Its function is as follows. Transport of potassium into the cell. Likely operates as a K(+):H(+) symporter. This Legionella pneumophila subsp. pneumophila (strain Philadelphia 1 / ATCC 33152 / DSM 7513) protein is Probable potassium transport system protein Kup 2.